The sequence spans 271 residues: Putative mitochondrial carrier protein PET8 (271 aa).

Solcar repeat units lie at residues 3 to 76 (STFL…MKQQ), 91 to 177 (AEVL…LKKK), and 187 to 270 (VSAW…VHSL). The next 6 membrane-spanning stretches (helical) occupy residues 6–26 (LASL…FFPI), 51–71 (GLGS…VTYD), 97–117 (MLSS…AEVI), 152–168 (GWWT…CIQF), 193–213 (AVCG…LDVL), and 251–271 (MWIS…HSLF).

The protein belongs to the mitochondrial carrier (TC 2.A.29) family.

It localises to the mitochondrion inner membrane. In Eremothecium gossypii (strain ATCC 10895 / CBS 109.51 / FGSC 9923 / NRRL Y-1056) (Yeast), this protein is Putative mitochondrial carrier protein PET8 (PET8).